The sequence spans 970 residues: Anaphase-promoting complex subunit 3 (970 aa).

TPR repeat units follow at residues 35–68, 74–107, 142–175, and 185–218; these read EDNL…TMIK, ALSN…NNNN, NNNS…NSIS, and GSVY…YPFL. The segment at 106-149 is disordered; the sequence is NNNNNNNNNNNNNNNNNNNNNNNKDKCNNSNKNNDSNNNSNSNN. Residues 274–300 form a disordered region; it reads KVNNNNNNNNNNNNNINNNNSSNKNNE. 2 TPR repeats span residues 319 to 353 and 361 to 394; these read IKPN…TPIN and TNQQ…TPQT. Disordered regions lie at residues 358–379, 414–525, and 556–582; these read IQQT…PSQQ, PIPM…TTTT, and SSLS…HNKS. Over residues 359 to 379 the composition is skewed to low complexity; it reads QQTNQQQQQQQQQQPQQPSQQ. The segment covering 424–443 has biased composition (polar residues); the sequence is SKGSQHPPSSNSQTPYTPST. Positions 446–460 are enriched in basic residues; it reads VHHHQKQQPHQHKKS. The span at 500-525 shows a compositional bias: low complexity; sequence TSSTSKQQQQQQQTKQQTTTTTTTTT. TPR repeat units lie at residues 546 to 580, 636 to 671, 672 to 705, 740 to 773, 775 to 807, 808 to 841, 843 to 876, 878 to 910, and 911 to 944; these read TEEF…HHHN, LELF…QYRT, GWVL…EPYR, PYSW…DPDM, YAYT…DPRH, YNAF…NESS, VLCC…QPKN, FAKF…EPKE, and TPIY…DPKN. Positions 570–580 are enriched in basic residues; the sequence is YQQHHHLHHHN.

This sequence belongs to the APC3/CDC27 family. As to quaternary structure, the APC/C is composed of at least 13 subunits that stay tightly associated throughout the cell cycle: anapc1, anapc2, anapc3, anapc4, anapc5, anapc6, anapc7, anapc8, anapc10, anapc11, cdc20, cdc26 and cdh1.

The protein resides in the nucleus. Its pathway is protein modification; protein ubiquitination. Functionally, component of the anaphase promoting complex/cyclosome (APC/C), a cell cycle-regulated E3 ubiquitin-protein ligase complex that controls progression through mitosis and the G1 phase of the cell cycle. The protein is Anaphase-promoting complex subunit 3 (anapc3) of Dictyostelium discoideum (Social amoeba).